Reading from the N-terminus, the 212-residue chain is Adenylate kinase (212 aa).

Position 10 to 15 (10 to 15) interacts with ATP; that stretch reads GAGKGT. The NMP stretch occupies residues 30–59; sequence STGDMFRAAMANQTEMGRLAKSYIDKGELV. AMP contacts are provided by residues threonine 31, arginine 36, 57–59, 86–89, and glutamine 93; these read ELV and GYPR. The segment at 127–159 is LID; that stretch reads GRIINRKTGETFHKVFNPPVDYKEEDYYQREDD. ATP is bound by residues arginine 128 and 137-138; that span reads TF. AMP is bound by residues arginine 156 and arginine 167. Glutamine 195 contacts ATP.

The protein belongs to the adenylate kinase family. As to quaternary structure, monomer.

The protein localises to the cytoplasm. The enzyme catalyses AMP + ATP = 2 ADP. It participates in purine metabolism; AMP biosynthesis via salvage pathway; AMP from ADP: step 1/1. In terms of biological role, catalyzes the reversible transfer of the terminal phosphate group between ATP and AMP. Plays an important role in cellular energy homeostasis and in adenine nucleotide metabolism. This chain is Adenylate kinase, found in Streptococcus pyogenes serotype M1.